Consider the following 242-residue polypeptide: Biosynthetic peptidoglycan transglycosylase (242 aa).

Residues 19-39 (ILAALAVFWGGGIALFSVVPV) traverse the membrane as a helical segment.

The protein belongs to the glycosyltransferase 51 family.

The protein localises to the cell inner membrane. The enzyme catalyses [GlcNAc-(1-&gt;4)-Mur2Ac(oyl-L-Ala-gamma-D-Glu-L-Lys-D-Ala-D-Ala)](n)-di-trans,octa-cis-undecaprenyl diphosphate + beta-D-GlcNAc-(1-&gt;4)-Mur2Ac(oyl-L-Ala-gamma-D-Glu-L-Lys-D-Ala-D-Ala)-di-trans,octa-cis-undecaprenyl diphosphate = [GlcNAc-(1-&gt;4)-Mur2Ac(oyl-L-Ala-gamma-D-Glu-L-Lys-D-Ala-D-Ala)](n+1)-di-trans,octa-cis-undecaprenyl diphosphate + di-trans,octa-cis-undecaprenyl diphosphate + H(+). The protein operates within cell wall biogenesis; peptidoglycan biosynthesis. Peptidoglycan polymerase that catalyzes glycan chain elongation from lipid-linked precursors. This is Biosynthetic peptidoglycan transglycosylase from Salmonella agona (strain SL483).